Reading from the N-terminus, the 238-residue chain is tRNA (guanine-N(7)-)-methyltransferase (238 aa).

Glu-70, Asp-95, Asp-122, and Asp-145 together coordinate S-adenosyl-L-methionine. Asp-145 is an active-site residue. Substrate is bound by residues Lys-149, Asp-181, and Thr-216–Glu-219.

This sequence belongs to the class I-like SAM-binding methyltransferase superfamily. TrmB family.

It carries out the reaction guanosine(46) in tRNA + S-adenosyl-L-methionine = N(7)-methylguanosine(46) in tRNA + S-adenosyl-L-homocysteine. It participates in tRNA modification; N(7)-methylguanine-tRNA biosynthesis. Catalyzes the formation of N(7)-methylguanine at position 46 (m7G46) in tRNA. The polypeptide is tRNA (guanine-N(7)-)-methyltransferase (Neisseria meningitidis serogroup C / serotype 2a (strain ATCC 700532 / DSM 15464 / FAM18)).